We begin with the raw amino-acid sequence, 236 residues long: Snake venom serine protease pallase (236 aa).

One can recognise a Peptidase S1 domain in the interval 1–227 (VIGGDECNIN…HLDWIENIIA (227 aa)). Intrachain disulfides connect C7–C139, C26–C42, C74–C234, C118–C188, C150–C167, and C178–C203. Residues H41 and D86 each act as charge relay system in the active site. Residue S182 is the Charge relay system of the active site.

The protein belongs to the peptidase S1 family. Snake venom subfamily. As to quaternary structure, monomer. In terms of tissue distribution, expressed by the venom gland.

It is found in the secreted. In terms of biological role, snake venom serine protease that may act in the hemostasis system of the prey. The sequence is that of Snake venom serine protease pallase from Gloydius halys (Chinese water mocassin).